We begin with the raw amino-acid sequence, 98 residues long: NADH-ubiquinone oxidoreductase chain 4L (98 aa).

3 helical membrane passes run 1 to 21, 36 to 56, and 61 to 81; these read MVLIKLNIIVAFMLALSGVLI, MMLSLFIFMAAMITHFHMFSI, and LILLVFSACEAGVGLALLVSI.

The protein belongs to the complex I subunit 4L family.

The protein localises to the mitochondrion membrane. It catalyses the reaction a ubiquinone + NADH + 5 H(+)(in) = a ubiquinol + NAD(+) + 4 H(+)(out). In terms of biological role, core subunit of the mitochondrial membrane respiratory chain NADH dehydrogenase (Complex I) which catalyzes electron transfer from NADH through the respiratory chain, using ubiquinone as an electron acceptor. Part of the enzyme membrane arm which is embedded in the lipid bilayer and involved in proton translocation. The chain is NADH-ubiquinone oxidoreductase chain 4L (MT-ND4L) from Didelphis virginiana (North American opossum).